The following is a 51-amino-acid chain: Ribosomal protein eL39-like 2 (51 aa).

Belongs to the eukaryotic ribosomal protein eL39 family. Component of a male germ cell-specific 60S large ribosomal subunit (LSU), which contains RPL10L and RPL39L, instead of RPL10 and RPL39 paralogs. The composition of the rest of the complex is similar to classical ribosomes. In terms of tissue distribution, testis specific.

The protein localises to the cytoplasm. In terms of biological role, male germ cell-specific component of the ribosome, which is required for the formation of sperm and male fertility. Replaces the RPL39 paralog in the ribosome of male germ cells. The ribosome is a large ribonucleoprotein complex responsible for the synthesis of proteins in the cell. The male germ cell-specific ribosome displays a ribosomal polypeptide exit tunnel of distinct size and charge states compared with the classical ribosome. It is responsible for regulating the biosynthesis and folding of a subset of male germ-cell-specific proteins that are essential for the formation of sperm. This Homo sapiens (Human) protein is Ribosomal protein eL39-like 2.